The chain runs to 230 residues: Cytidylate kinase (230 aa).

Gly12–Thr20 is a binding site for ATP.

It belongs to the cytidylate kinase family. Type 1 subfamily.

It localises to the cytoplasm. The catalysed reaction is CMP + ATP = CDP + ADP. It catalyses the reaction dCMP + ATP = dCDP + ADP. The chain is Cytidylate kinase from Shewanella sp. (strain MR-4).